A 234-amino-acid polypeptide reads, in one-letter code: Large ribosomal subunit protein uL1 (234 aa).

This sequence belongs to the universal ribosomal protein uL1 family. Part of the 50S ribosomal subunit.

Binds directly to 23S rRNA. The L1 stalk is quite mobile in the ribosome, and is involved in E site tRNA release. Functionally, protein L1 is also a translational repressor protein, it controls the translation of the L11 operon by binding to its mRNA. This is Large ribosomal subunit protein uL1 from Helicobacter pylori (strain G27).